Consider the following 764-residue polypeptide: MLLFVLTCLLAVFPAISTKSPIFGPEEVNSVEGNSVSITCYYPPTSVNRHTRKYWCRQGARGGCITLISSEGYVSSKYAGRANLTNFPENGTFVVNIAQLSQDDSGRYKCGLGINSRGLSFDVSLEVSQGPGLLNDTKVYTVDLGRTVTINCPFKTENAQKRKSLYKQIGLYPVLVIDSSGYVNPNYTGRIRLDIQGTGQLLFSVVINQLRLSDAGQYLCQAGDDSNSNKKNADLQVLKPEPELVYEDLRGSVTFHCALGPEVANVAKFLCRQSSGENCDVVVNTLGKRAPAFEGRILLNPQDKDGSFSVVITGLRKEDAGRYLCGAHSDGQLQEGSPIQAWQLFVNEESTIPRSPTVVKGVAGGSVAVLCPYNRKESKSIKYWCLWEGAQNGRCPLLVDSEGWVKAQYEGRLSLLEEPGNGTFTVILNQLTSRDAGFYWCLTNGDTLWRTTVEIKIIEGEPNLKVPGNVTAVLGETLKVPCHFPCKFSSYEKYWCKWNNTGCQALPSQDEGPSKAFVNCDENSRLVSLTLNLVTRADEGWYWCGVKQGHFYGETAAVYVAVEERKAAGSRDVSLAKADAAPDEKVLDSGFREIENKAIQDPRLFAEEKAVADTRDQADGSRASVDSGSSEEQGGSSRALVSTLVPLGLVLAVGAVAVGVARARHRKNVDRVSIRSYRTDISMSDFENSREFGANDNMGASSITQETSLGGKEEFVATTESTTETKEPKKAKRSSKEEAEMAYKDFLLQSSTVAAEAQDGPQEA.

Residues 1–18 (MLLFVLTCLLAVFPAIST) form the signal peptide. Residues 19–120 (KSPIFGPEEV…GLGINSRGLS (102 aa)) form the Ig-like V-type 1; required for binding to polymeric IgA and IgM domain. Over 19-638 (KSPIFGPEEV…SSEEQGGSSR (620 aa)) the chain is Extracellular. 2 disulfides stabilise this stretch: cysteine 40/cysteine 110 and cysteine 56/cysteine 64. Residues asparagine 83, asparagine 90, asparagine 135, and asparagine 186 are each glycosylated (N-linked (GlcNAc...) asparagine). 4 Ig-like V-type domains span residues 145 to 237 (GRTV…DLQV), 250 to 352 (RGSV…ESTI), 364 to 458 (GGSV…IKII), and 462 to 561 (PNLK…VYVA). 5 cysteine pairs are disulfide-bonded: cysteine 152/cysteine 220, cysteine 257/cysteine 325, cysteine 271/cysteine 279, cysteine 371/cysteine 441, and cysteine 385/cysteine 395. N-linked (GlcNAc...) asparagine glycosylation is present at asparagine 421. Asparagine 469 carries N-linked (GlcNAc...) (complex) asparagine glycosylation. 3 disulfides stabilise this stretch: cysteine 482/cysteine 544, cysteine 486/cysteine 520, and cysteine 496/cysteine 503. N-linked (GlcNAc...) asparagine glycosylation is present at asparagine 499. Residues 609–619 (KAVADTRDQAD) show a composition bias toward basic and acidic residues. The interval 609–637 (KAVADTRDQADGSRASVDSGSSEEQGGSS) is disordered. Low complexity predominate over residues 627–637 (SGSSEEQGGSS). Residues 639-661 (ALVSTLVPLGLVLAVGAVAVGVA) traverse the membrane as a helical segment. Over 662-764 (RARHRKNVDR…AEAQDGPQEA (103 aa)) the chain is Cytoplasmic. Serine 673, serine 682, serine 689, and serine 735 each carry phosphoserine. The segment at 717 to 738 (ATTESTTETKEPKKAKRSSKEE) is disordered. Positions 723 to 738 (TETKEPKKAKRSSKEE) are enriched in basic and acidic residues.

As to quaternary structure, interacts (mainly via CDR1-like domain) with dimeric IgA. Interacts (mainly via CDR2-like domain) with pentameric IgM. Either free or part of the secretory IgA (sIgA) complex that consists of two, four or five IgA monomers, and two additional non-Ig polypeptides, namely the JCHAIN and the secretory component (the proteolytic product of PIGR). Free secretory component interacts with bacterial antigens toxA of C.difficile and eaeA of E.coli. Post-translationally, N-glycosylated. N-glycosylation is required for anchoring IgA molecules to mucus, but is not necessary for Ig binding.

It localises to the cell membrane. The protein localises to the secreted. Functionally, mediates selective transcytosis of polymeric IgA and IgM across mucosal epithelial cells. Binds polymeric IgA and IgM at the basolateral surface of epithelial cells. The complex is then transported across the cell to be secreted at the apical surface. During this process, a cleavage occurs that separates the extracellular (known as the secretory component) from the transmembrane segment. In terms of biological role, through its N-linked glycans ensures anchoring of secretory IgA (sIgA) molecules to mucus lining the epithelial surface to neutralize extracellular pathogens. On its own (free form) may act as a non-specific microbial scavenger to prevent pathogen interaction with epithelial cells. This chain is Polymeric immunoglobulin receptor (PIGR), found in Homo sapiens (Human).